Reading from the N-terminus, the 430-residue chain is MRNYVEIVDVTARQILDSRANPTVEVEVILEDGTEGRAAVPSGASTGAFEAVELRDEDKEKYMGKGVLKAVENVNNYIAEELIGMNVFDQVLIDKTMLELDGTHNKGKLGANATLGVSLACARAAAKYLGLSLYQYIGGVNAKVLPVPMMNIVNGGKHADNNVDLQEFMIMPVGAPSFTEALRMSSEVYHTLKSLLKSKGQDTGVGDEGGFAPNLNSNEEAIQIIVEAVEKAGYVPGKDIFIALDPASTEIYEDGKYNLKSEGKVLSSEEMVDYYVTLVNKYPIISIEDAMAEEDWEGWSILTEKLGDKVQLVGDDLFVTNTERLKKGIDKKVANSILIKLNQIGTLTETLNAIEMAERAGYTAVVSHRSGETEDTTIADLVVAVNAGQIKTGAPARSERVAKYNQLLRIEEELGETAEYRGLNTFYNIK.

Glutamine 166 is a binding site for (2R)-2-phosphoglycerate. The active-site Proton donor is glutamate 208. Positions 245, 288, and 315 each coordinate Mg(2+). (2R)-2-phosphoglycerate contacts are provided by lysine 340, arginine 369, serine 370, and lysine 391. Lysine 340 acts as the Proton acceptor in catalysis.

This sequence belongs to the enolase family. The cofactor is Mg(2+).

The protein resides in the cytoplasm. It localises to the secreted. The protein localises to the cell surface. It carries out the reaction (2R)-2-phosphoglycerate = phosphoenolpyruvate + H2O. It functions in the pathway carbohydrate degradation; glycolysis; pyruvate from D-glyceraldehyde 3-phosphate: step 4/5. Catalyzes the reversible conversion of 2-phosphoglycerate (2-PG) into phosphoenolpyruvate (PEP). It is essential for the degradation of carbohydrates via glycolysis. The sequence is that of Enolase from Clostridium kluyveri (strain NBRC 12016).